A 918-amino-acid polypeptide reads, in one-letter code: Serine/threonine-protein kinase D1 (918 aa).

Residue Y93 is modified to Phosphotyrosine. The Phorbol-ester/DAG-type 1 zinc finger occupies 144–194 (PHALFVHSYRAPAFCDHCGEMLWGLVRQGLKCEGCGLNYHKRCAFKIPNNC). Phosphoserine is present on residues S203, S206, S217, and S221. Residues 276–326 (PHTFVIHSYTRPTVCQFCKKLLKGLFRQGLQCKDCRFNCHKRCAPKVPNNC) form a Phorbol-ester/DAG-type 2 zinc finger. Disordered regions lie at residues 338–362 (SPGAESDVVMEEGSDDNDSERNSGL) and 379–410 (AEGQSGGAEMQDPDADQEDSNRTISPSTSNNI). Residues 345–355 (VVMEEGSDDND) are compositionally biased toward acidic residues. S351 carries the post-translational modification Phosphoserine. Residues 400 to 410 (RTISPSTSNNI) are compositionally biased toward polar residues. S403 and S407 each carry phosphoserine; by MAPK13. Residues 428-547 (TVMKEGWMVH…WEVAIQHALM (120 aa)) form the PH domain. Residue Y438 is modified to Phosphotyrosine. S454 bears the Phosphoserine mark. At Y469 the chain carries Phosphotyrosine; by ABL. The residue at position 508 (Y508) is a Phosphotyrosine. Position 554 is a phosphoserine (S554). The Protein kinase domain occupies 589 to 845 (IFPDEVLGSG…VDKTLSHPWL (257 aa)). ATP contacts are provided by residues 595-603 (LGSGQFGIV) and K618. Residue D712 is the Proton acceptor of the active site. S744 is subject to Phosphoserine; by PKC/PRKCD. The residue at position 748 (S748) is a Phosphoserine; by autocatalysis and PKC/PRKCD. At Y755 the chain carries Phosphotyrosine. S916 carries the post-translational modification Phosphoserine; by autocatalysis.

Belongs to the protein kinase superfamily. CAMK Ser/Thr protein kinase family. PKD subfamily. In terms of assembly, interacts (via N-terminus) with ADAP1/CENTA1. Interacts with MAPK13. Interacts with DAPK1 in an oxidative stress-regulated manner. Interacts with USP28; the interaction induces phosphorylation of USP28 and activated KRAS-mediated stabilization of ZNF304. Interacts with AKAP13 (via C-terminal domain). It depends on Mg(2+) as a cofactor. Phosphorylated at Ser-403 and Ser-407 by MAPK13 during regulation of insulin secretion in pancreatic beta cells. Phosphorylated by DAPK1. Phosphorylated at Tyr-93 and by ABL at Tyr-469, which primes the kinase in response to oxidative stress, and promotes a second step activating phosphorylation at Ser-744/Ser-748 by PKRD. Phosphorylated at Ser-916 upon S.enterica infection in macrophages.

The protein localises to the cytoplasm. The protein resides in the cell membrane. It is found in the golgi apparatus. It localises to the trans-Golgi network. The enzyme catalyses L-seryl-[protein] + ATP = O-phospho-L-seryl-[protein] + ADP + H(+). The catalysed reaction is L-threonyl-[protein] + ATP = O-phospho-L-threonyl-[protein] + ADP + H(+). Its activity is regulated as follows. Activated by DAG and phorbol esters. Phorbol-ester/DAG-type domain 1 binds DAG with high affinity and appears to play the dominant role in mediating translocation to the cell membrane and trans-Golgi network. Phorbol-ester/DAG-type domain 2 binds phorbol ester with higher affinity. Autophosphorylation of Ser-748 and phosphorylation of Ser-744 by PKC relieves auto-inhibition by the PH domain. Phosphorylation on Tyr-469 by the SRC-ABL1 pathway in response to oxidative stress, is also required for activation. Activated by DAPK1 under oxidative stress. In terms of biological role, serine/threonine-protein kinase that converts transient diacylglycerol (DAG) signals into prolonged physiological effects downstream of PKC, and is involved in the regulation of MAPK8/JNK1 and Ras signaling, Golgi membrane integrity and trafficking, cell survival through NF-kappa-B activation, cell migration, cell differentiation by mediating HDAC7 nuclear export, cell proliferation via MAPK1/3 (ERK1/2) signaling, and plays a role in cardiac hypertrophy, VEGFA-induced angiogenesis, genotoxic-induced apoptosis and flagellin-stimulated inflammatory response. Phosphorylates the epidermal growth factor receptor (EGFR) on dual threonine residues, which leads to the suppression of epidermal growth factor (EGF)-induced MAPK8/JNK1 activation and subsequent JUN phosphorylation. Phosphorylates RIN1, inducing RIN1 binding to 14-3-3 proteins YWHAB, YWHAE and YWHAZ and increased competition with RAF1 for binding to GTP-bound form of Ras proteins (NRAS, HRAS and KRAS). Acts downstream of the heterotrimeric G-protein beta/gamma-subunit complex to maintain the structural integrity of the Golgi membranes, and is required for protein transport along the secretory pathway. In the trans-Golgi network (TGN), regulates the fission of transport vesicles that are on their way to the plasma membrane. May act by activating the lipid kinase phosphatidylinositol 4-kinase beta (PI4KB) at the TGN for the local synthesis of phosphorylated inositol lipids, which induces a sequential production of DAG, phosphatidic acid (PA) and lyso-PA (LPA) that are necessary for membrane fission and generation of specific transport carriers to the cell surface. Under oxidative stress, is phosphorylated at Tyr-469 via SRC-ABL1 and contributes to cell survival by activating IKK complex and subsequent nuclear translocation and activation of NFKB1. Involved in cell migration by regulating integrin alpha-5/beta-3 recycling and promoting its recruitment in newly forming focal adhesion. In osteoblast differentiation, mediates the bone morphogenetic protein 2 (BMP2)-induced nuclear export of HDAC7, which results in the inhibition of HDAC7 transcriptional repression of RUNX2. In neurons, plays an important role in neuronal polarity by regulating the biogenesis of TGN-derived dendritic vesicles, and is involved in the maintenance of dendritic arborization and Golgi structure in hippocampal cells. May potentiate mitogenesis induced by the neuropeptide bombesin or vasopressin by mediating an increase in the duration of MAPK1/3 (ERK1/2) signaling, which leads to accumulation of immediate-early gene products including FOS that stimulate cell cycle progression. Plays an important role in the proliferative response induced by low calcium in keratinocytes, through sustained activation of MAPK1/3 (ERK1/2) pathway. Downstream of novel PKC signaling, plays a role in cardiac hypertrophy by phosphorylating HDAC5, which in turn triggers XPO1/CRM1-dependent nuclear export of HDAC5, MEF2A transcriptional activation and induction of downstream target genes that promote myocyte hypertrophy and pathological cardiac remodeling. Mediates cardiac troponin I (TNNI3) phosphorylation at the PKA sites, which results in reduced myofilament calcium sensitivity, and accelerated crossbridge cycling kinetics. The PRKD1-HDAC5 pathway is also involved in angiogenesis by mediating VEGFA-induced specific subset of gene expression, cell migration, and tube formation. In response to VEGFA, is necessary and required for HDAC7 phosphorylation which induces HDAC7 nuclear export and endothelial cell proliferation and migration. During apoptosis induced by cytarabine and other genotoxic agents, PRKD1 is cleaved by caspase-3 at Asp-378, resulting in activation of its kinase function and increased sensitivity of cells to the cytotoxic effects of genotoxic agents. In epithelial cells, is required for transducing flagellin-stimulated inflammatory responses by binding and phosphorylating TLR5, which contributes to MAPK14/p38 activation and production of inflammatory cytokines. Acts as an activator of NLRP3 inflammasome assembly by mediating phosphorylation of NLRP3. May play a role in inflammatory response by mediating activation of NF-kappa-B. May be involved in pain transmission by directly modulating TRPV1 receptor. Plays a role in activated KRAS-mediated stabilization of ZNF304 in colorectal cancer (CRC) cells. Regulates nuclear translocation of transcription factor TFEB in macrophages upon live S.enterica infection. This is Serine/threonine-protein kinase D1 (Prkd1) from Mus musculus (Mouse).